The chain runs to 293 residues: 33 kDa chaperonin (293 aa).

Cystine bridges form between C238/C240 and C271/C274.

The protein belongs to the HSP33 family. Under oxidizing conditions two disulfide bonds are formed involving the reactive cysteines. Under reducing conditions zinc is bound to the reactive cysteines and the protein is inactive.

It localises to the cytoplasm. Functionally, redox regulated molecular chaperone. Protects both thermally unfolding and oxidatively damaged proteins from irreversible aggregation. Plays an important role in the bacterial defense system toward oxidative stress. In Staphylococcus epidermidis (strain ATCC 35984 / DSM 28319 / BCRC 17069 / CCUG 31568 / BM 3577 / RP62A), this protein is 33 kDa chaperonin.